The sequence spans 427 residues: UDP-N-acetylglucosamine 1-carboxyvinyltransferase 2 (427 aa).

Residue lysine 19–asparagine 20 coordinates phosphoenolpyruvate. Arginine 91 is a UDP-N-acetyl-alpha-D-glucosamine binding site. The Proton donor role is filled by cysteine 115. Residue cysteine 115 is modified to 2-(S-cysteinyl)pyruvic acid O-phosphothioketal. The UDP-N-acetyl-alpha-D-glucosamine site is built by aspartate 307 and valine 329.

Belongs to the EPSP synthase family. MurA subfamily.

The protein resides in the cytoplasm. The catalysed reaction is phosphoenolpyruvate + UDP-N-acetyl-alpha-D-glucosamine = UDP-N-acetyl-3-O-(1-carboxyvinyl)-alpha-D-glucosamine + phosphate. It participates in cell wall biogenesis; peptidoglycan biosynthesis. Functionally, cell wall formation. Adds enolpyruvyl to UDP-N-acetylglucosamine. The chain is UDP-N-acetylglucosamine 1-carboxyvinyltransferase 2 from Prochlorococcus marinus (strain SARG / CCMP1375 / SS120).